The primary structure comprises 308 residues: Porphobilinogen deaminase (308 aa).

Residue cysteine 241 is modified to S-(dipyrrolylmethanemethyl)cysteine.

It belongs to the HMBS family. In terms of assembly, monomer. Dipyrromethane is required as a cofactor.

It catalyses the reaction 4 porphobilinogen + H2O = hydroxymethylbilane + 4 NH4(+). It functions in the pathway porphyrin-containing compound metabolism; protoporphyrin-IX biosynthesis; coproporphyrinogen-III from 5-aminolevulinate: step 2/4. Functionally, tetrapolymerization of the monopyrrole PBG into the hydroxymethylbilane pre-uroporphyrinogen in several discrete steps. This Staphylococcus aureus (strain MSSA476) protein is Porphobilinogen deaminase.